Consider the following 288-residue polypeptide: 4-diphosphocytidyl-2-C-methyl-D-erythritol kinase (288 aa).

Lys-8 is an active-site residue. 92–102 (PVAAGMAGGST) is a binding site for ATP. Asp-134 is an active-site residue.

This sequence belongs to the GHMP kinase family. IspE subfamily.

The enzyme catalyses 4-CDP-2-C-methyl-D-erythritol + ATP = 4-CDP-2-C-methyl-D-erythritol 2-phosphate + ADP + H(+). Its pathway is isoprenoid biosynthesis; isopentenyl diphosphate biosynthesis via DXP pathway; isopentenyl diphosphate from 1-deoxy-D-xylulose 5-phosphate: step 3/6. In terms of biological role, catalyzes the phosphorylation of the position 2 hydroxy group of 4-diphosphocytidyl-2C-methyl-D-erythritol. The sequence is that of 4-diphosphocytidyl-2-C-methyl-D-erythritol kinase from Clostridium perfringens (strain SM101 / Type A).